The following is a 363-amino-acid chain: Phosphoserine aminotransferase (363 aa).

L-glutamate is bound at residue R42. Residues 76 to 77, W102, T156, D175, and Q198 each bind pyridoxal 5'-phosphate; that span reads GR. Residue K199 is modified to N6-(pyridoxal phosphate)lysine. 240 to 241 serves as a coordination point for pyridoxal 5'-phosphate; that stretch reads NT.

Belongs to the class-V pyridoxal-phosphate-dependent aminotransferase family. SerC subfamily. As to quaternary structure, homodimer. Pyridoxal 5'-phosphate is required as a cofactor.

The protein resides in the cytoplasm. The catalysed reaction is O-phospho-L-serine + 2-oxoglutarate = 3-phosphooxypyruvate + L-glutamate. It carries out the reaction 4-(phosphooxy)-L-threonine + 2-oxoglutarate = (R)-3-hydroxy-2-oxo-4-phosphooxybutanoate + L-glutamate. It functions in the pathway amino-acid biosynthesis; L-serine biosynthesis; L-serine from 3-phospho-D-glycerate: step 2/3. It participates in cofactor biosynthesis; pyridoxine 5'-phosphate biosynthesis; pyridoxine 5'-phosphate from D-erythrose 4-phosphate: step 3/5. Its function is as follows. Catalyzes the reversible conversion of 3-phosphohydroxypyruvate to phosphoserine and of 3-hydroxy-2-oxo-4-phosphonooxybutanoate to phosphohydroxythreonine. This Shewanella sp. (strain MR-7) protein is Phosphoserine aminotransferase.